A 674-amino-acid chain; its full sequence is Penicillin-binding protein activator LpoA (674 aa).

The first 31 residues, 1–31 (MLSSTFVRTKAGRSKPVRLTAVIAAALFLAG), serve as a signal peptide directing secretion. Cys32 is lipidated: N-palmitoyl cysteine. Cys32 is lipidated: S-diacylglycerol cysteine. Positions 291–349 (GVTPSTPVQQQQPASVPEQAAQPASTDPNANGAVSTSAPDAAPVTAAQPSAPSTAPITP) are disordered. Low complexity predominate over residues 292–315 (VTPSTPVQQQQPASVPEQAAQPAS). Residues 316 to 328 (TDPNANGAVSTSA) show a composition bias toward polar residues. The segment covering 331 to 349 (AAPVTAAQPSAPSTAPITP) has biased composition (low complexity).

The protein belongs to the LpoA family. In terms of assembly, interacts with PBP1a.

Its subcellular location is the cell outer membrane. In terms of biological role, regulator of peptidoglycan synthesis that is essential for the function of penicillin-binding protein 1A (PBP1a). The chain is Penicillin-binding protein activator LpoA from Serratia proteamaculans (strain 568).